We begin with the raw amino-acid sequence, 788 residues long: Endonuclease MutS2 (788 aa).

332-339 (GPNTGGKT) serves as a coordination point for ATP. A Smr domain is found at 713 to 788 (VDLRGMDAEE…GTGVTVVELK (76 aa)).

This sequence belongs to the DNA mismatch repair MutS family. MutS2 subfamily. Homodimer. Binds to stalled ribosomes, contacting rRNA.

Functionally, endonuclease that is involved in the suppression of homologous recombination and thus may have a key role in the control of bacterial genetic diversity. In terms of biological role, acts as a ribosome collision sensor, splitting the ribosome into its 2 subunits. Detects stalled/collided 70S ribosomes which it binds and splits by an ATP-hydrolysis driven conformational change. Acts upstream of the ribosome quality control system (RQC), a ribosome-associated complex that mediates the extraction of incompletely synthesized nascent chains from stalled ribosomes and their subsequent degradation. Probably generates substrates for RQC. This is Endonuclease MutS2 from Clostridium botulinum (strain Langeland / NCTC 10281 / Type F).